A 227-amino-acid polypeptide reads, in one-letter code: Large ribosomal subunit protein uL1 (227 aa).

Belongs to the universal ribosomal protein uL1 family. Part of the 50S ribosomal subunit.

In terms of biological role, binds directly to 23S rRNA. The L1 stalk is quite mobile in the ribosome, and is involved in E site tRNA release. Its function is as follows. Protein L1 is also a translational repressor protein, it controls the translation of the L11 operon by binding to its mRNA. This Brevibacillus brevis (strain 47 / JCM 6285 / NBRC 100599) protein is Large ribosomal subunit protein uL1.